The sequence spans 123 residues: Small ribosomal subunit protein uS11 (123 aa).

It belongs to the universal ribosomal protein uS11 family. In terms of assembly, part of the 30S ribosomal subunit. Interacts with proteins S7 and S18. Binds to IF-3.

Functionally, located on the platform of the 30S subunit, it bridges several disparate RNA helices of the 16S rRNA. Forms part of the Shine-Dalgarno cleft in the 70S ribosome. The sequence is that of Small ribosomal subunit protein uS11 from Coxiella burnetii (strain CbuK_Q154) (Coxiella burnetii (strain Q154)).